A 2512-amino-acid chain; its full sequence is Fatty acid synthase (2512 aa).

At Glu2 the chain carries N-acetylglutamate. In terms of domain architecture, Ketosynthase family 3 (KS3) spans 2-406 (EDVVIAGIAG…GSNAHVILRP (405 aa)). Active-site for beta-ketoacyl synthase activity residues include Cys161, His293, and His331. Positions 427–815 (GRTQEAVEIL…GINVLGNNLF (389 aa)) are acyl and malonyl transferases. Ser580 serves as the catalytic For acyl/malonyl transferase activity. An acyl-CoA-binding positions include 646–647 (DT), Phe670, and Arg772. The segment at 844 to 967 (PKAEDFPSGS…ISLLENDALK (124 aa)) is N-terminal hotdog fold. A PKS/mFAS DH domain is found at 844-1111 (PKAEDFPSGS…ASVAPRRQQE (268 aa)). The active-site Proton acceptor; for dehydratase activity is the His878. The C-terminal hotdog fold stretch occupies residues 984–1111 (AKSGLLMEDV…ASVAPRRQQE (128 aa)). Catalysis depends on Asp1034, which acts as the Proton donor; for dehydratase activity. S-nitrosocysteine is present on Cys1475. The tract at residues 1638 to 1866 (WEVPENWTLE…MIKIQEEEKQ (229 aa)) is enoyl reductase. 1675–1692 (VLIHSGSGGVGQAAIAIA) is an NADP(+) binding site. Lys1708 is subject to N6-(pyridoxal phosphate)lysine. The beta-ketoacyl reductase stretch occupies residues 1867–2119 (YPLRSEPVKL…SFVLAEKVSV (253 aa)). 1889 to 1904 (SYIITGGLGGFGLELA) provides a ligand contact to NADP(+). Residue Cys2093 is modified to S-nitrosocysteine. Positions 2120 to 2200 (KSEGGSQRDL…ELSSKTGTAE (81 aa)) constitute a Carrier domain. Ser2158 carries the post-translational modification O-(pantetheine 4'-phosphoryl)serine. The thioesterase stretch occupies residues 2209-2511 (KTGPGEPPKL…LAEPRVSVRE (303 aa)). Active-site for thioesterase activity residues include Ser2309 and His2482.

In terms of assembly, homodimer which is arranged in a head to tail fashion. In terms of processing, S-nitrosylation of Fatty acid synthase at cysteine residues Cys-1475 or Cys-2093 is important for the enzyme dimerization. In adipocytes, S-nitrosylation of Fatty acid synthase occurs under physiological conditions and gradually increases during adipogenesis.

It carries out the reaction acetyl-CoA + n malonyl-CoA + 2n NADPH + 2n H(+) = a long-chain fatty acid + (n+1) CoA + n CO2 + 2n NADP(+).. The catalysed reaction is holo-[ACP] + acetyl-CoA = acetyl-[ACP] + CoA. It catalyses the reaction holo-[ACP] + malonyl-CoA = malonyl-[ACP] + CoA. The enzyme catalyses a fatty acyl-[ACP] + malonyl-[ACP] + H(+) = a 3-oxoacyl-[ACP] + holo-[ACP] + CO2. It carries out the reaction a (3R)-hydroxyacyl-[ACP] + NADP(+) = a 3-oxoacyl-[ACP] + NADPH + H(+). The catalysed reaction is a (3R)-hydroxyacyl-[ACP] = a (2E)-enoyl-[ACP] + H2O. It catalyses the reaction a 2,3-saturated acyl-[ACP] + NADP(+) = a (2E)-enoyl-[ACP] + NADPH + H(+). The enzyme catalyses hexadecanoyl-[ACP] + H2O = hexadecanoate + holo-[ACP] + H(+). It carries out the reaction acetyl-[ACP] + malonyl-[ACP] + H(+) = 3-oxobutanoyl-[ACP] + holo-[ACP] + CO2. The catalysed reaction is 3-oxobutanoyl-[ACP] + NADPH + H(+) = (3R)-hydroxybutanoyl-[ACP] + NADP(+). It catalyses the reaction (3R)-hydroxybutanoyl-[ACP] = (2E)-butenoyl-[ACP] + H2O. The enzyme catalyses (2E)-butenoyl-[ACP] + NADPH + H(+) = butanoyl-[ACP] + NADP(+). It carries out the reaction butanoyl-[ACP] + malonyl-[ACP] + H(+) = 3-oxohexanoyl-[ACP] + holo-[ACP] + CO2. The catalysed reaction is 3-oxohexanoyl-[ACP] + NADPH + H(+) = (3R)-hydroxyhexanoyl-[ACP] + NADP(+). It catalyses the reaction (3R)-hydroxyhexanoyl-[ACP] = (2E)-hexenoyl-[ACP] + H2O. The enzyme catalyses (2E)-hexenoyl-[ACP] + NADPH + H(+) = hexanoyl-[ACP] + NADP(+). It carries out the reaction hexanoyl-[ACP] + malonyl-[ACP] + H(+) = 3-oxooctanoyl-[ACP] + holo-[ACP] + CO2. The catalysed reaction is 3-oxooctanoyl-[ACP] + NADPH + H(+) = (3R)-hydroxyoctanoyl-[ACP] + NADP(+). It catalyses the reaction (3R)-hydroxyoctanoyl-[ACP] = (2E)-octenoyl-[ACP] + H2O. The enzyme catalyses (2E)-octenoyl-[ACP] + NADPH + H(+) = octanoyl-[ACP] + NADP(+). It carries out the reaction octanoyl-[ACP] + malonyl-[ACP] + H(+) = 3-oxodecanoyl-[ACP] + holo-[ACP] + CO2. The catalysed reaction is 3-oxodecanoyl-[ACP] + NADPH + H(+) = (3R)-hydroxydecanoyl-[ACP] + NADP(+). It catalyses the reaction (3R)-hydroxydecanoyl-[ACP] = (2E)-decenoyl-[ACP] + H2O. The enzyme catalyses (2E)-decenoyl-[ACP] + NADPH + H(+) = decanoyl-[ACP] + NADP(+). It carries out the reaction decanoyl-[ACP] + malonyl-[ACP] + H(+) = 3-oxododecanoyl-[ACP] + holo-[ACP] + CO2. The catalysed reaction is 3-oxododecanoyl-[ACP] + NADPH + H(+) = (3R)-hydroxydodecanoyl-[ACP] + NADP(+). It catalyses the reaction (3R)-hydroxydodecanoyl-[ACP] = (2E)-dodecenoyl-[ACP] + H2O. The enzyme catalyses (2E)-dodecenoyl-[ACP] + NADPH + H(+) = dodecanoyl-[ACP] + NADP(+). It carries out the reaction dodecanoyl-[ACP] + malonyl-[ACP] + H(+) = 3-oxotetradecanoyl-[ACP] + holo-[ACP] + CO2. The catalysed reaction is 3-oxotetradecanoyl-[ACP] + NADPH + H(+) = (3R)-hydroxytetradecanoyl-[ACP] + NADP(+). It catalyses the reaction (3R)-hydroxytetradecanoyl-[ACP] = (2E)-tetradecenoyl-[ACP] + H2O. The enzyme catalyses (2E)-tetradecenoyl-[ACP] + NADPH + H(+) = tetradecanoyl-[ACP] + NADP(+). It carries out the reaction tetradecanoyl-[ACP] + malonyl-[ACP] + H(+) = 3-oxohexadecanoyl-[ACP] + holo-[ACP] + CO2. The catalysed reaction is 3-oxohexadecanoyl-[ACP] + NADPH + H(+) = (3R)-hydroxyhexadecanoyl-[ACP] + NADP(+). It catalyses the reaction (3R)-hydroxyhexadecanoyl-[ACP] = (2E)-hexadecenoyl-[ACP] + H2O. The enzyme catalyses (2E)-hexadecenoyl-[ACP] + NADPH + H(+) = hexadecanoyl-[ACP] + NADP(+). It carries out the reaction hexadecanoyl-[ACP] + malonyl-[ACP] + H(+) = 3-oxooctadecanoyl-[ACP] + holo-[ACP] + CO2. The catalysed reaction is 3-oxooctadecanoyl-[ACP] + NADPH + H(+) = (3R)-hydroxyoctadecanoyl-[ACP] + NADP(+). It catalyses the reaction (3R)-hydroxyoctadecanoyl-[ACP] = (2E)-octadecenoyl-[ACP] + H2O. The enzyme catalyses (2E)-octadecenoyl-[ACP] + NADPH + H(+) = octadecanoyl-[ACP] + NADP(+). It carries out the reaction tetradecanoyl-[ACP] + H2O = tetradecanoate + holo-[ACP] + H(+). The catalysed reaction is octadecanoyl-[ACP] + H2O = octadecanoate + holo-[ACP] + H(+). It functions in the pathway lipid metabolism; fatty acid biosynthesis. With respect to regulation, cerulenin, a potent non-competitive pharmacological inhibitor of FAS, binds covalently to the active site of the condensing enzyme region, inactivating a key enzyme step in fatty acid synthesis. In terms of biological role, fatty acid synthetase is a multifunctional enzyme that catalyzes the de novo biosynthesis of long-chain saturated fatty acids starting from acetyl-CoA and malonyl-CoA in the presence of NADPH. This multifunctional protein contains 7 catalytic activities and a site for the binding of the prosthetic group 4'-phosphopantetheine of the acyl carrier protein ([ACP]) domain. This is Fatty acid synthase (FASN) from Gallus gallus (Chicken).